The following is a 193-amino-acid chain: MKITNVEMVISAVKQEQYPAGQLPEFALAGRSNVGKSSFINKMINRKNFARTSSKPGKTQTLNFYRINDAFYFVDVPGYGFAKVSKTEREAWGKMIETYFTTREQLKAALLIVDLRHPPTKDDVMMYEFLKHYNIPTLVIATKADKIPRGKWQQHAKVAKETLRLISDDELIIFSAETGQGKDEAWGALQKWM.

Positions 22 to 193 (QLPEFALAGR…EAWGALQKWM (172 aa)) constitute an EngB-type G domain. GTP-binding positions include 30–37 (GRSNVGKS), 57–61 (GKTQT), 75–78 (DVPG), 142–145 (TKAD), and 174–176 (FSA). Residues Ser-37 and Thr-59 each contribute to the Mg(2+) site.

The protein belongs to the TRAFAC class TrmE-Era-EngA-EngB-Septin-like GTPase superfamily. EngB GTPase family. Mg(2+) serves as cofactor.

Necessary for normal cell division and for the maintenance of normal septation. This chain is Probable GTP-binding protein EngB, found in Anoxybacillus flavithermus (strain DSM 21510 / WK1).